The sequence spans 405 residues: Imidazolonepropionase (405 aa).

Fe(3+)-binding residues include His-73 and His-75. Zn(2+) contacts are provided by His-73 and His-75. 4-imidazolone-5-propanoate contacts are provided by Arg-82, Tyr-145, and His-178. Tyr-145 is a binding site for N-formimidoyl-L-glutamate. His-243 is a Fe(3+) binding site. His-243 serves as a coordination point for Zn(2+). Gln-246 contributes to the 4-imidazolone-5-propanoate binding site. A Fe(3+)-binding site is contributed by Asp-318. Residue Asp-318 participates in Zn(2+) binding. Residues Asn-320 and Gly-322 each contribute to the N-formimidoyl-L-glutamate site. Thr-323 is a binding site for 4-imidazolone-5-propanoate.

Belongs to the metallo-dependent hydrolases superfamily. HutI family. It depends on Zn(2+) as a cofactor. Fe(3+) serves as cofactor.

The protein localises to the cytoplasm. The enzyme catalyses 4-imidazolone-5-propanoate + H2O = N-formimidoyl-L-glutamate. It functions in the pathway amino-acid degradation; L-histidine degradation into L-glutamate; N-formimidoyl-L-glutamate from L-histidine: step 3/3. Its function is as follows. Catalyzes the hydrolytic cleavage of the carbon-nitrogen bond in imidazolone-5-propanoate to yield N-formimidoyl-L-glutamate. It is the third step in the universal histidine degradation pathway. The polypeptide is Imidazolonepropionase (Brucella anthropi (strain ATCC 49188 / DSM 6882 / CCUG 24695 / JCM 21032 / LMG 3331 / NBRC 15819 / NCTC 12168 / Alc 37) (Ochrobactrum anthropi)).